The primary structure comprises 107 residues: uncharacterized protein (107 aa).

Residues 1 to 4 lie on the Cytoplasmic side of the membrane; the sequence is MSLV. The helical transmembrane segment at 5–25 threads the bilayer; it reads IDIADTIVSLTALIGLIITLI. Topologically, residues 26–107 are extracellular; it reads KFHSQNKEDA…ELCRSSDRSK (82 aa).

The protein resides in the host membrane. This is an uncharacterized protein from Acidianus sp. F28 (AFV-2).